Reading from the N-terminus, the 624-residue chain is UvrABC system protein C (624 aa).

The region spanning 27 to 105 (LSPGVYRMLS…IKSLGPRYNI (79 aa)) is the GIY-YIG domain. In terms of domain architecture, UVR spans 215 to 250 (RRVQHDLTARMESAAEAMEYEAAAVFRDRIRALTRI).

It belongs to the UvrC family. Interacts with UvrB in an incision complex.

The protein resides in the cytoplasm. The UvrABC repair system catalyzes the recognition and processing of DNA lesions. UvrC both incises the 5' and 3' sides of the lesion. The N-terminal half is responsible for the 3' incision and the C-terminal half is responsible for the 5' incision. This is UvrABC system protein C from Paramagnetospirillum magneticum (strain ATCC 700264 / AMB-1) (Magnetospirillum magneticum).